The following is a 784-amino-acid chain: MKVNKFFKKTTHVLLVAGLTIGLTAPFTGTTAQAAADTVPIQILGINDFHGALETASKDASGSPIGGADYLATNLDNATNSFLQANPGATTDNAIRVQAGDMVGASPAVSGLLQDEPTMKVLQKMNFEVGTLGNHEFDEGLPEYKRILDGVSTNKFGPIVEAYPRVKSDMKIVAANVVNKGTNTVAEGFLPYYVKEIDGVKVGFIGIVTTEIPNLVLANHIKDYDFLDEAETIVKYSAELRGQGVNAIVVLSHVPALSTGNPNTGTKQDVAGEAANMMTKANELDPNNSVDLVLAGHNHQYTNGLVGKTRIVQSYNNGKAFSDVTGELDKTTGDFVSPPDAKITYNTRSVTPNADITAVTEDAKSRIEGVINETIGLANKDVISRDTNPDNKAIDDKESELGNMITDAQRYMANKAGADVDFAMTNNGGIRSDLTTRLANGQNEITWGAAQAVQPFGNILQVVEMTGADILEALNQQYLSNQTYFLQISGLKYTFTDTDDLDHAYKVASVTTEDGTPLKTDQKYKVVINDFLFGGGDGFSAFKKANLVTAIDPDTETFINYIKDQKAAGKVITAQKEGRKVYKSQAEIDKETKDAAIKAIKEATKINKLAEKDKTLTGTTLPGATVSVQKATANARMALAAGPNATADANGKFSVDVTSLNLKKGDQITTTITDPNGYSTTFQATVQAAATTPPDNGNGGTDNGNGNGNNGGTDGNGGTNNGNGSGTNGGTTTTEDPTTTTSNTSTTGTSSNTSLPTTGDTAGLATVFGVILTTTALYVLRKRS.

The first 34 residues, 1 to 34 (MKVNKFFKKTTHVLLVAGLTIGLTAPFTGTTAQA), serve as a signal peptide directing secretion. A disordered region spans residues 690-761 (ATTPPDNGNG…NTSLPTTGDT (72 aa)). The span at 697–729 (GNGGTDNGNGNGNNGGTDGNGGTNNGNGSGTNG) shows a compositional bias: gly residues. A compositionally biased stretch (low complexity) spans 730–759 (GTTTTEDPTTTTSNTSTTGTSSNTSLPTTG). Positions 755–759 (LPTTG) match the LPXTG sorting signal motif. Pentaglycyl murein peptidoglycan amidated threonine is present on Thr758. Residues 759–784 (GDTAGLATVFGVILTTTALYVLRKRS) constitute a propeptide, removed by sortase A.

It is found in the secreted. Its subcellular location is the cell wall. The chain is Cell wall protein Lmo0130 from Listeria monocytogenes serovar 1/2a (strain ATCC BAA-679 / EGD-e).